The following is a 314-amino-acid chain: DNA topoisomerase I (314 aa).

In terms of domain architecture, Topo IB-type catalytic spans 77–314; sequence IQNRNAKRDR…VDHVKSSTDG (238 aa). The active-site O-(3'-phospho-DNA)-tyrosine intermediate is the tyrosine 274.

Belongs to the type IB topoisomerase family.

The protein resides in the virion. The enzyme catalyses ATP-independent breakage of single-stranded DNA, followed by passage and rejoining.. Its function is as follows. Releases the supercoiling and torsional tension of DNA introduced during the DNA replication and transcription by transiently cleaving and rejoining one strand of the DNA duplex. Introduces a single-strand break via transesterification at the specific target site 5'-[CT]CCTTp site in duplex DNA. The scissile phosphodiester is attacked by the catalytic tyrosine of the enzyme, resulting in the formation of a DNA-(3'-phosphotyrosyl)-enzyme intermediate and the expulsion of a 5'-OH DNA strand. The free DNA strand then undergoes passage around the unbroken strand thus removing DNA supercoils. Finally, in the religation step, the DNA 5'-OH attacks the covalent intermediate to expel the active-site tyrosine and restore the DNA phosphodiester backbone. The chain is DNA topoisomerase I (OPG111) from Cynomys gunnisoni (Gunnison's prairie dog).